The primary structure comprises 180 residues: Crossover junction endodeoxyribonuclease RuvC (180 aa).

Active-site residues include Asp7, Glu66, and Asp138. Asp7, Glu66, and Asp138 together coordinate Mg(2+).

This sequence belongs to the RuvC family. In terms of assembly, homodimer which binds Holliday junction (HJ) DNA. The HJ becomes 2-fold symmetrical on binding to RuvC with unstacked arms; it has a different conformation from HJ DNA in complex with RuvA. In the full resolvosome a probable DNA-RuvA(4)-RuvB(12)-RuvC(2) complex forms which resolves the HJ. Mg(2+) is required as a cofactor.

The protein localises to the cytoplasm. It catalyses the reaction Endonucleolytic cleavage at a junction such as a reciprocal single-stranded crossover between two homologous DNA duplexes (Holliday junction).. The RuvA-RuvB-RuvC complex processes Holliday junction (HJ) DNA during genetic recombination and DNA repair. Endonuclease that resolves HJ intermediates. Cleaves cruciform DNA by making single-stranded nicks across the HJ at symmetrical positions within the homologous arms, yielding a 5'-phosphate and a 3'-hydroxyl group; requires a central core of homology in the junction. The consensus cleavage sequence is 5'-(A/T)TT(C/G)-3'. Cleavage occurs on the 3'-side of the TT dinucleotide at the point of strand exchange. HJ branch migration catalyzed by RuvA-RuvB allows RuvC to scan DNA until it finds its consensus sequence, where it cleaves and resolves the cruciform DNA. This Janthinobacterium sp. (strain Marseille) (Minibacterium massiliensis) protein is Crossover junction endodeoxyribonuclease RuvC.